We begin with the raw amino-acid sequence, 360 residues long: Threonine synthase (360 aa).

N6-(pyridoxal phosphate)lysine is present on Lys-69. Pyridoxal 5'-phosphate is bound by residues Asn-95, 196–200 (GNAGN), and Thr-326.

It belongs to the threonine synthase family. In terms of assembly, homodimer. It depends on pyridoxal 5'-phosphate as a cofactor.

It catalyses the reaction O-phospho-L-homoserine + H2O = L-threonine + phosphate. It functions in the pathway amino-acid biosynthesis; L-threonine biosynthesis; L-threonine from L-aspartate: step 5/5. Catalyzes the gamma-elimination of phosphate from L-phosphohomoserine and the beta-addition of water to produce L-threonine. The protein is Threonine synthase (thrC) of Mycobacterium bovis (strain ATCC BAA-935 / AF2122/97).